A 342-amino-acid chain; its full sequence is Uroporphyrinogen decarboxylase (342 aa).

Substrate is bound by residues 26–30 (RQAGR), D76, Y150, S205, and H321.

The protein belongs to the uroporphyrinogen decarboxylase family. Homodimer.

The protein resides in the cytoplasm. It catalyses the reaction uroporphyrinogen III + 4 H(+) = coproporphyrinogen III + 4 CO2. It participates in porphyrin-containing compound metabolism; protoporphyrin-IX biosynthesis; coproporphyrinogen-III from 5-aminolevulinate: step 4/4. Its function is as follows. Catalyzes the decarboxylation of four acetate groups of uroporphyrinogen-III to yield coproporphyrinogen-III. The chain is Uroporphyrinogen decarboxylase from Sphingopyxis alaskensis (strain DSM 13593 / LMG 18877 / RB2256) (Sphingomonas alaskensis).